The chain runs to 422 residues: Hexuronate transporter (422 aa).

The next 11 membrane-spanning stretches (helical) occupy residues 9 to 29 (VILF…ALSI), 45 to 65 (MGLI…LGGV), 82 to 102 (VWSL…LLII), 141 to 161 (TPLG…AFSW), 163 to 183 (VSFV…FKFV), 219 to 239 (LFTA…LTWF), 256 to 276 (VITV…GFVS), 294 to 314 (VVLV…GLVA), 321 to 341 (TLVA…WAVI), 356 to 376 (FMHF…GFIV), and 381 to 401 (TFSG…LAVI).

Belongs to the major facilitator superfamily. Phthalate permease family.

It is found in the cell membrane. It catalyses the reaction aldehydo-D-glucuronate(in) + H(+)(in) = aldehydo-D-glucuronate(out) + H(+)(out). It carries out the reaction aldehydo-D-galacturonate(out) + H(+)(out) = aldehydo-D-galacturonate(in) + H(+)(in). Functionally, transport of aldohexuronates such as D-glucuronate and D-galacturonate. This Bacillus subtilis (strain 168) protein is Hexuronate transporter.